The following is a 473-amino-acid chain: Adenosylhomocysteinase (473 aa).

The substrate site is built by T60, D135, and E197. Position 198-200 (198-200 (TTT)) interacts with NAD(+). Positions 227 and 231 each coordinate substrate. NAD(+) is bound by residues N232, 261 to 266 (GFGDVG), E284, N319, 340 to 342 (IGH), and N385.

This sequence belongs to the adenosylhomocysteinase family. It depends on NAD(+) as a cofactor.

Its subcellular location is the cytoplasm. It carries out the reaction S-adenosyl-L-homocysteine + H2O = L-homocysteine + adenosine. Its pathway is amino-acid biosynthesis; L-homocysteine biosynthesis; L-homocysteine from S-adenosyl-L-homocysteine: step 1/1. Its function is as follows. May play a key role in the regulation of the intracellular concentration of adenosylhomocysteine. The protein is Adenosylhomocysteinase of Bradyrhizobium diazoefficiens (strain JCM 10833 / BCRC 13528 / IAM 13628 / NBRC 14792 / USDA 110).